The chain runs to 411 residues: Serine hydroxymethyltransferase (411 aa).

120–122 contacts (6S)-5,6,7,8-tetrahydrofolate; the sequence is GHL. Position 225 is an N6-(pyridoxal phosphate)lysine (K225). (6S)-5,6,7,8-tetrahydrofolate is bound at residue 350–352; sequence SPF.

Belongs to the SHMT family. In terms of assembly, homodimer. Requires pyridoxal 5'-phosphate as cofactor.

The protein resides in the cytoplasm. The catalysed reaction is (6R)-5,10-methylene-5,6,7,8-tetrahydrofolate + glycine + H2O = (6S)-5,6,7,8-tetrahydrofolate + L-serine. It participates in one-carbon metabolism; tetrahydrofolate interconversion. The protein operates within amino-acid biosynthesis; glycine biosynthesis; glycine from L-serine: step 1/1. Its function is as follows. Catalyzes the reversible interconversion of serine and glycine with tetrahydrofolate (THF) serving as the one-carbon carrier. This reaction serves as the major source of one-carbon groups required for the biosynthesis of purines, thymidylate, methionine, and other important biomolecules. Also exhibits THF-independent aldolase activity toward beta-hydroxyamino acids, producing glycine and aldehydes, via a retro-aldol mechanism. This Lactobacillus gasseri (strain ATCC 33323 / DSM 20243 / BCRC 14619 / CIP 102991 / JCM 1131 / KCTC 3163 / NCIMB 11718 / NCTC 13722 / AM63) protein is Serine hydroxymethyltransferase.